We begin with the raw amino-acid sequence, 24 residues long: Antimicrobial peptide PGQ (24 aa).

It belongs to the gastrin/cholecystokinin family. Magainin subfamily. In terms of tissue distribution, is synthesized in the stomach and stored in a novel granular multinucleated cell in the gastric mucosa. It is stored as active, processed peptides in large granules within the granular gland secretions of the skin.

The protein localises to the secreted. Its function is as follows. Antimicrobial peptide. The chain is Antimicrobial peptide PGQ (pgq) from Xenopus laevis (African clawed frog).